Reading from the N-terminus, the 199-residue chain is Transgelin-3 (199 aa).

Residues 24-136 (ADLENKLVDW…RTLMALGSVA (113 aa)) enclose the Calponin-homology (CH) domain. Residue S163 is modified to Phosphoserine. Residues 174 to 199 (IGLQMGSNKGASQAGMTGYGMPRQIM) form a Calponin-like repeat. The segment covering 178–188 (MGSNKGASQAG) has biased composition (polar residues). The segment at 178-199 (MGSNKGASQAGMTGYGMPRQIM) is disordered.

Belongs to the calponin family.

This is Transgelin-3 (Tagln3) from Mus musculus (Mouse).